The sequence spans 425 residues: Serine--tRNA ligase (425 aa).

233 to 235 is a binding site for L-serine; the sequence is TAE. 264 to 266 serves as a coordination point for ATP; sequence RRE. Glutamate 287 provides a ligand contact to L-serine. 351–354 contributes to the ATP binding site; that stretch reads EISS. Position 385 (serine 385) interacts with L-serine.

This sequence belongs to the class-II aminoacyl-tRNA synthetase family. Type-1 seryl-tRNA synthetase subfamily. Homodimer. The tRNA molecule binds across the dimer.

The protein localises to the cytoplasm. The catalysed reaction is tRNA(Ser) + L-serine + ATP = L-seryl-tRNA(Ser) + AMP + diphosphate + H(+). It carries out the reaction tRNA(Sec) + L-serine + ATP = L-seryl-tRNA(Sec) + AMP + diphosphate + H(+). Its pathway is aminoacyl-tRNA biosynthesis; selenocysteinyl-tRNA(Sec) biosynthesis; L-seryl-tRNA(Sec) from L-serine and tRNA(Sec): step 1/1. Functionally, catalyzes the attachment of serine to tRNA(Ser). Is also able to aminoacylate tRNA(Sec) with serine, to form the misacylated tRNA L-seryl-tRNA(Sec), which will be further converted into selenocysteinyl-tRNA(Sec). The chain is Serine--tRNA ligase from Prochlorococcus marinus (strain MIT 9515).